The sequence spans 252 residues: Carbohydrate deacetylase (252 aa).

Mg(2+) is bound by residues histidine 59 and histidine 122.

The protein belongs to the YdjC deacetylase family. In terms of assembly, homodimer. Requires Mg(2+) as cofactor.

Functionally, probably catalyzes the deacetylation of acetylated carbohydrates an important step in the degradation of oligosaccharides. This Vibrio vulnificus (strain YJ016) protein is Carbohydrate deacetylase.